A 476-amino-acid polypeptide reads, in one-letter code: Elongation factor Tu, chloroplastic (476 aa).

Residues 1–67 (MAISAPAACS…QSTRRSFTVR (67 aa)) constitute a chloroplast transit peptide. A tr-type G domain is found at 77 to 281 (KPHVNIGTIG…AVDDYIPIPQ (205 aa)). The interval 86–93 (GHVDHGKT) is G1. Position 86-93 (86-93 (GHVDHGKT)) interacts with GTP. A Phosphothreonine modification is found at threonine 94. Residues 127 to 131 (GITIN) are G2. The tract at residues 148-151 (DCPG) is G3. Residues 148 to 152 (DCPGH) and 203 to 206 (NKED) each bind GTP. The tract at residues 203–206 (NKED) is G4. The interval 241 to 243 (SAL) is G5.

It belongs to the TRAFAC class translation factor GTPase superfamily. Classic translation factor GTPase family. EF-Tu/EF-1A subfamily. Interacts with PI5K2. Interacts with APD2.

Its subcellular location is the plastid. The protein resides in the chloroplast. Its function is as follows. This protein promotes the GTP-dependent binding of aminoacyl-tRNA to the A-site of ribosomes during protein biosynthesis. This is Elongation factor Tu, chloroplastic (TUFA) from Arabidopsis thaliana (Mouse-ear cress).